Consider the following 181-residue polypeptide: Adenylate kinase (181 aa).

Residue 10-15 coordinates ATP; that stretch reads GAGKGT. The NMP stretch occupies residues 30-59; the sequence is STGDLFRANIGEGTPLGLEAKSYIDAGKLV. Residues Thr-31, Arg-36, 57-59, 85-88, and Gln-92 each bind AMP; these read KLV and GFPR. The LID stretch occupies residues 126-132; it reads ARGRADD. Residue Arg-127 participates in ATP binding. 2 residues coordinate AMP: Arg-129 and Arg-140. Gly-166 is an ATP binding site.

It belongs to the adenylate kinase family. In terms of assembly, monomer.

It is found in the cytoplasm. The catalysed reaction is AMP + ATP = 2 ADP. Its pathway is purine metabolism; AMP biosynthesis via salvage pathway; AMP from ADP: step 1/1. Its function is as follows. Catalyzes the reversible transfer of the terminal phosphate group between ATP and AMP. Plays an important role in cellular energy homeostasis and in adenine nucleotide metabolism. The protein is Adenylate kinase of Corynebacterium aurimucosum (strain ATCC 700975 / DSM 44827 / CIP 107346 / CN-1) (Corynebacterium nigricans).